The chain runs to 1866 residues: Rho GTPase-activating protein 100F (1866 aa).

3 disordered regions span residues 22 to 98 (MLCC…AGVK), 262 to 336 (RRGN…NNYS), and 466 to 530 (LRSS…DTEA). Over residues 59 to 77 (GNQQHHGNQQHHGNQQQHH) the composition is skewed to low complexity. The region spanning 179–264 (LVEIVKRPGQ…LVLAIRQRRG (86 aa)) is the PDZ domain. A compositionally biased stretch (pro residues) spans 271-286 (PGPPTLSRPEQKPPPV). The span at 301-326 (TDRMPRPRSSRDRRTGDGREMTESRS) shows a compositional bias: basic and acidic residues. Residue serine 719 is modified to Phosphoserine. A disordered region spans residues 745 to 775 (AGPASPSGSILSTGGHQSPAPTPSATLPRPH). A compositionally biased stretch (polar residues) spans 750-760 (PSGSILSTGGH). The C2 domain maps to 789–908 (KLDKPIVDIG…LRQSPLHQLA (120 aa)). The region spanning 948-1148 (ADLETVVNRE…YLLQIWPQPQ (201 aa)) is the Rho-GAP domain. 6 disordered regions span residues 1273 to 1328 (GGSV…QVKI), 1356 to 1380 (PTTQADTESTLGCKESNGTASRRGN), 1393 to 1479 (SVVN…DLVS), 1514 to 1607 (FTPI…MVST), 1644 to 1727 (YTND…YGTL), and 1819 to 1840 (DEKPGSNGGNAHGEEKLGADKG). The span at 1282-1292 (DPSPLPLPGTP) shows a compositional bias: pro residues. Over residues 1293–1302 (SPGSSSASTG) the composition is skewed to low complexity. Composition is skewed to polar residues over residues 1356–1377 (PTTQADTESTLGCKESNGTASR), 1393–1408 (SVVNEESSYSSKYTGS), and 1416–1429 (GNSSYTPSKANASG). Residues 1443–1479 (SSATSSSSSSQATVLSAGSTATSAPTTSSDDSDDLVS) show a composition bias toward low complexity. Residues 1538-1587 (QLVTPISGSSSKPGATTGAISKYTTGSVESSINANSQKLSSPSRLCNSKD) are compositionally biased toward polar residues. 2 stretches are compositionally biased toward low complexity: residues 1590 to 1607 (SRTGTASSTTPATSMVST) and 1644 to 1658 (YTNDTKNSGSSSSKS). Residues 1659 to 1670 (GIGGGSGTGLGA) are compositionally biased toward gly residues. Low complexity-rich tracts occupy residues 1671 to 1688 (VSGASSETRSFGSTLFGS) and 1696 to 1720 (GSSHNHSSASPSPFTTTNGNGNHNT). Positions 1830–1839 (HGEEKLGADK) are enriched in basic and acidic residues.

Interacts (via PDZ domain) with Nrx-1; may recruit Nrx-1 to the presynaptic active zone.

Its subcellular location is the presynapse. Functionally, GTPase activator for the Rho-type GTPases by converting them to an inactive GDP-bound state. Promotes the anchoring of Liprin-alpha clusters at synapses. Recruits and keeps Nrx-1 levels high in active zones in the presynapse opposite the postsynaptic region. The polypeptide is Rho GTPase-activating protein 100F (RhoGAP100F) (Drosophila melanogaster (Fruit fly)).